A 402-amino-acid polypeptide reads, in one-letter code: Deoxyguanosinetriphosphate triphosphohydrolase-like protein (402 aa).

Residues 73 to 217 (RLTHTIEVAQ…AAIADDIAYN (145 aa)) form the HD domain.

This sequence belongs to the dGTPase family. Type 2 subfamily.

The chain is Deoxyguanosinetriphosphate triphosphohydrolase-like protein from Brucella suis (strain ATCC 23445 / NCTC 10510).